Consider the following 207-residue polypeptide: Superoxide dismutase [Mn] (207 aa).

His30, His78, Asp166, and His170 together coordinate Mn(2+).

The protein belongs to the iron/manganese superoxide dismutase family. In terms of assembly, homodimer. Mn(2+) is required as a cofactor.

It carries out the reaction 2 superoxide + 2 H(+) = H2O2 + O2. Destroys superoxide anion radicals which are normally produced within the cells and which are toxic to biological systems. The polypeptide is Superoxide dismutase [Mn] (sodA) (Chlamydia pneumoniae (Chlamydophila pneumoniae)).